The sequence spans 72 residues: Bowman-Birk type proteinase inhibitor (72 aa).

Cystine bridges form between C8–C61, C9–C24, C12–C57, C14–C22, C31–C38, C35–C50, and C40–C48.

Belongs to the Bowman-Birk serine protease inhibitor family.

Its function is as follows. This inhibitor has two domains, each with separate antiprotease activity. 1 mole of inhibitor inhibits either 1 mole of trypsin or 2 moles of chymotrypsin, stoichiometrically. The protein is Bowman-Birk type proteinase inhibitor of Vicia sativa subsp. nigra (Common vetch).